The chain runs to 411 residues: Corticotropin-releasing factor receptor 2 (411 aa).

Positions Met1–Ala19 form a signal peptide, not cleaved. Residues Met1–Lys108 lie on the Extracellular side of the membrane. Residues Asn13, Asn41, Asn74, Asn86, and Asn94 are each glycosylated (N-linked (GlcNAc...) asparagine). 3 disulfide bridges follow: Cys14–Cys50, Cys40–Cys83, and Cys64–Cys98. The chain crosses the membrane as a helical span at residues Tyr109 to Leu139. Residues Val140–Cys146 are Cytoplasmic-facing. Residues Leu147–Leu171 traverse the membrane as a helical segment. Over Ile172 to Arg185 the chain is Extracellular. Cys184 and Cys254 form a disulfide bridge. The chain crosses the membrane as a helical span at residues Cys186–Val214. The Cytoplasmic portion of the chain corresponds to Met215–His221. Residues Leu222–Tyr249 traverse the membrane as a helical segment. Over Glu250–Asp265 the chain is Extracellular. Residues Tyr266–Met291 traverse the membrane as a helical segment. Topologically, residues Thr292–Thr302 are cytoplasmic. A helical membrane pass occupies residues Ile303–Phe327. Topologically, residues Val328–Asp334 are extracellular. The chain crosses the membrane as a helical span at residues Leu335–Gly364. The Cytoplasmic portion of the chain corresponds to Glu365–Val411.

This sequence belongs to the G-protein coupled receptor 2 family. Monomer. Interacts with CRF, UCN, UCN2 and UCN3. In terms of processing, a N-glycosylation site within the signal peptide impedes its proper cleavage and function. Highly expressed in the heart. Also expressed in lungs, skeletal muscle, gastrointestinal tract, epididymis, and brain.

It localises to the cell membrane. Functionally, G-protein coupled receptor for CRH (corticotropin-releasing factor), UCN (urocortin), UCN2 and UCN3. Has high affinity for UCN. Ligand binding causes a conformation change that triggers signaling via guanine nucleotide-binding proteins (G proteins) and down-stream effectors, such as adenylate cyclase. Promotes the activation of adenylate cyclase, leading to increased intracellular cAMP levels. The chain is Corticotropin-releasing factor receptor 2 (Crhr2) from Mus musculus (Mouse).